Consider the following 124-residue polypeptide: Protein MGF 110-4L (124 aa).

An N-terminal signal peptide occupies residues Met-1–Cys-28. A glycan (N-linked (GlcNAc...) asparagine; by host) is linked at Asn-64. A Prevents secretion from ER motif is present at residues Lys-121 to Leu-124.

The protein belongs to the asfivirus MGF 110 family.

It is found in the virion. Its subcellular location is the host endoplasmic reticulum-Golgi intermediate compartment. In terms of biological role, causes the redistribution of lumenal ER protein to an enlarged ERGIC compartment. The protein is Protein MGF 110-4L of Ornithodoros (relapsing fever ticks).